Consider the following 295-residue polypeptide: Ribosomal protein L11 methyltransferase (295 aa).

Residues Thr-146, Gly-167, Asp-189, and Asn-231 each coordinate S-adenosyl-L-methionine.

The protein belongs to the methyltransferase superfamily. PrmA family.

It is found in the cytoplasm. It carries out the reaction L-lysyl-[protein] + 3 S-adenosyl-L-methionine = N(6),N(6),N(6)-trimethyl-L-lysyl-[protein] + 3 S-adenosyl-L-homocysteine + 3 H(+). In terms of biological role, methylates ribosomal protein L11. The polypeptide is Ribosomal protein L11 methyltransferase (Vibrio campbellii (strain ATCC BAA-1116)).